Reading from the N-terminus, the 690-residue chain is Polyphosphate kinase (690 aa).

ATP is bound at residue N45. Residues R375 and R405 each contribute to the Mg(2+) site. The active-site Phosphohistidine intermediate is H435. ATP is bound by residues Y468, R564, and H592.

This sequence belongs to the polyphosphate kinase 1 (PPK1) family. The cofactor is Mg(2+). An intermediate of this reaction is the autophosphorylated ppk in which a phosphate is covalently linked to a histidine residue through a N-P bond.

The catalysed reaction is [phosphate](n) + ATP = [phosphate](n+1) + ADP. In terms of biological role, catalyzes the reversible transfer of the terminal phosphate of ATP to form a long-chain polyphosphate (polyP). In Pseudomonas aeruginosa (strain ATCC 15692 / DSM 22644 / CIP 104116 / JCM 14847 / LMG 12228 / 1C / PRS 101 / PAO1), this protein is Polyphosphate kinase.